Here is a 127-residue protein sequence, read N- to C-terminus: MFNKQTNAIVLLFTFALFATLAVATPTIVARTGGSGSSCPTTDIKCCSHVGTFSEVQGYIDDDTKVKLIPALLGLLGATIDVVLGVVLGVTCSSISVGSSCSATTVCCENVVFNGLINVGCTAIDIL.

A signal peptide spans 1 to 24 (MFNKQTNAIVLLFTFALFATLAVA). Intrachain disulfides connect Cys39/Cys107, Cys46/Cys101, Cys47/Cys92, and Cys108/Cys121.

Belongs to the fungal hydrophobin family. As to quaternary structure, self-assembles to form functional amyloid fibrils called rodlets. Self-assembly into fibrillar rodlets occurs spontaneously at hydrophobic:hydrophilic interfaces and the rodlets further associate laterally to form amphipathic monolayers.

It is found in the secreted. Its subcellular location is the cell wall. Functionally, aerial growth, conidiation, and dispersal of filamentous fungi in the environment rely upon a capability of their secreting small amphipathic proteins called hydrophobins (HPBs) with low sequence identity. Class I can self-assemble into an outermost layer of rodlet bundles on aerial cell surfaces, conferring cellular hydrophobicity that supports fungal growth, development and dispersal; whereas Class II form highly ordered films at water-air interfaces through intermolecular interactions but contribute nothing to the rodlet structure. The sequence is that of Unclassified hydrophobin 5 from Pleurotus ostreatus (strain PC15) (Oyster mushroom).